The primary structure comprises 1369 residues: Neurofascin (1369 aa).

A signal peptide spans 1–25 (MVLHSHQLTYAGIAFALCLHHLISA). Topologically, residues 26-1235 (IEVPLDSNIQ…NHVDIATQGW (1210 aa)) are extracellular. Ig-like C2-type domains are found at residues 42–138 (PTIT…LQVS) and 144–231 (PKEK…NPYT). Intrachain disulfides connect C64–C119 and C163–C214. N-linked (GlcNAc...) asparagine glycosylation is found at N241, N247, and N323. Ig-like C2-type domains follow at residues 262 to 350 (PSFM…ISVR), 355 to 442 (PYWL…AFVS), 448 to 535 (PRIL…VRLE), and 539 to 626 (PTRI…AYLT). Intrachain disulfides connect C286–C334 and C376–C426. Residues N427, N464, and N501 are each glycosylated (N-linked (GlcNAc...) asparagine). Intrachain disulfides connect C470-C519 and C561-C610. Fibronectin type-III domains are found at residues 645 to 740 (RPRD…TSGA), 745 to 838 (NPTG…SGED), 843 to 945 (APTD…TPEG), and 949 to 1057 (SPRY…TPAS). N692 is a glycosylation site (N-linked (GlcNAc...) asparagine). Residues 730–739 (MPSERYQTSG) show a composition bias toward polar residues. The segment at 730 to 753 (MPSERYQTSGARPEINPTGVQGAG) is disordered. Residues N767, N793, N853, N994, and N1009 are each glycosylated (N-linked (GlcNAc...) asparagine). Positions 1078 to 1097 (TTATPTTETPPTEIPTTAIP) are disordered. 4 N-linked (GlcNAc...) asparagine glycosylation sites follow: N1133, N1150, N1156, and N1171. In terms of domain architecture, Fibronectin type-III 5 spans 1133 to 1222 (NGSSIWDIRA…SYITFTTSSA (90 aa)). A helical membrane pass occupies residues 1236 to 1256 (FIGLMCAIALLVLILLIVCFI). At 1257–1369 (KRSRGGKYPV…SPVNAIYSLA (113 aa)) the chain is on the cytoplasmic side. 2 stretches are compositionally biased toward basic and acidic residues: residues 1266–1282 (VRDN…KNVE) and 1289–1298 (RSLESDEDNK). Positions 1266–1369 (VRDNKDEHLN…SPVNAIYSLA (104 aa)) are disordered. A compositionally biased stretch (polar residues) spans 1300 to 1313 (LPNSQTSLDGTIKQ).

It belongs to the immunoglobulin superfamily. L1/neurofascin/NgCAM family. Post-translationally, N-glycosylated and O-glycosylated. May be proteolytically cleaved at Arg-636.

The protein localises to the cell membrane. Its function is as follows. Cell adhesion, ankyrin-binding protein which may be involved in neurite extension, axonal guidance, synaptogenesis, myelination and neuron-glial cell interactions. This chain is Neurofascin (NFASC), found in Gallus gallus (Chicken).